The primary structure comprises 150 residues: Galactose-binding lectin (150 aa).

His16 and Gly19 together coordinate D-galactose. An N-linked (GlcNAc...) asparagine glycan is attached at Asn26. D-galactose contacts are provided by residues Asp27, 35–37 (DIH), His64, and Gly67. N-linked (GlcNAc...) asparagine glycosylation occurs at Asn74. D-galactose-binding positions include Glu75, 83–85 (DRH), His108, and Gly111. Residue Asn118 is glycosylated (N-linked (GlcNAc...) asparagine). Residues Glu119 and 127-129 (DKH) each bind D-galactose.

In terms of assembly, homodimer. Likely to form large oligomers; oligomerization enhances hemagglutination activity. Post-translationally, glycosylated.

Its activity is regulated as follows. Hemagglutination activity is not dependent on divalent cations. Hemagglutination activity is highly inhibited by D-galactose and N-acetyl-D-galactosamine, and to a lesser extent by raffinose. Also inhibited by melibiose and alpha-lactose, but not by beta-lactose or D-glucose. Functionally, D-galactose-binding lectin. Also binds N-acetyl-D-galactosamine. Has hemagglutination activity towards all types of human erythrocytes (O, A and B) and rabbit erythrocytes. Agglutinates Gram-negative and Gram-positive bacteria including E.coli DH5-alpha and L.plantarum ATCC8014, respectively, and has bacteriostatic activity against them. Also agglutinates M.lysodeikticus. May be involved in innate immunity by recognizing and eliminating pathogens. This is Galactose-binding lectin from Mytilus californianus (California mussel).